The following is a 318-amino-acid chain: Epithelial-stromal interaction protein 1 (318 aa).

Residues 1 to 60 (MNTRNRVVNSGLGASPASRPTRDPQDPSGRQGELSPVEDQREGLEAAPKGPSRESVVHAG) form a disordered region. 2 coiled-coil regions span residues 73 to 188 (NINR…HQQY) and 240 to 280 (LKAE…HQTE).

Highly expressed in placenta, small intestine, spleen, kidney, thymus, liver, salivary gland and testes. Weakly expressed in breast, skeletal muscle and colon. Highly expressed in breast cancer upon interaction between tumor cells and stromal cells in vitro. Expressed in blood mononuclear cells from patients with systemic lupus erythematosus (SLE).

Plays a role in M1 macrophage polarization and is required for the proper regulation of gene expression during M1 versus M2 macrophage differentiation. Might play a role in RELA/p65 and STAT1 phosphorylation and nuclear localization upon activation of macrophages. In Homo sapiens (Human), this protein is Epithelial-stromal interaction protein 1 (EPSTI1).